The chain runs to 134 residues: Profilin-2 (134 aa).

A disulfide bond links Cys-13 and Cys-118. Positions 84–100 match the Involved in PIP2 interaction motif; sequence AVIRGKKGSGGITIKKT. Thr-114 carries the phosphothreonine modification.

Belongs to the profilin family. In terms of assembly, occurs in many kinds of cells as a complex with monomeric actin in a 1:1 ratio. Post-translationally, phosphorylated by MAP kinases.

It is found in the cytoplasm. The protein localises to the cytoskeleton. In terms of biological role, binds to actin and affects the structure of the cytoskeleton. At high concentrations, profilin prevents the polymerization of actin, whereas it enhances it at low concentrations. The protein is Profilin-2 of Olea europaea (Common olive).